Here is a 401-residue protein sequence, read N- to C-terminus: Argininosuccinate synthase (401 aa).

ATP-binding positions include 7 to 15 (AYSGGLDTS) and Ala-34. Residues Tyr-85 and Ser-90 each contribute to the L-citrulline site. Gly-115 is a binding site for ATP. L-aspartate contacts are provided by Thr-117, Asn-121, and Asp-122. An L-citrulline-binding site is contributed by Asn-121. L-citrulline-binding residues include Arg-125, Ser-174, Ser-183, Glu-259, and Tyr-271.

The protein belongs to the argininosuccinate synthase family. Type 1 subfamily. In terms of assembly, homotetramer.

It localises to the cytoplasm. It catalyses the reaction L-citrulline + L-aspartate + ATP = 2-(N(omega)-L-arginino)succinate + AMP + diphosphate + H(+). It participates in amino-acid biosynthesis; L-arginine biosynthesis; L-arginine from L-ornithine and carbamoyl phosphate: step 2/3. The protein is Argininosuccinate synthase of Desulforamulus reducens (strain ATCC BAA-1160 / DSM 100696 / MI-1) (Desulfotomaculum reducens).